The chain runs to 351 residues: GTPase Obg (351 aa).

Residues 1-159 (MKFLDQAKVY…RWIWLRLKLI (159 aa)) enclose the Obg domain. Residues 160–328 (ADVGLVGLPN…LCGSAWDIVL (169 aa)) form the OBG-type G domain. Residues 166–173 (GLPNAGKS), 191–195 (FTTLY), 213–216 (DIPG), 280–283 (NKID), and 309–311 (SGV) each bind GTP. Residues S173 and T193 each coordinate Mg(2+).

Belongs to the TRAFAC class OBG-HflX-like GTPase superfamily. OBG GTPase family. As to quaternary structure, monomer. Mg(2+) serves as cofactor.

The protein localises to the cytoplasm. In terms of biological role, an essential GTPase which binds GTP, GDP and possibly (p)ppGpp with moderate affinity, with high nucleotide exchange rates and a fairly low GTP hydrolysis rate. Plays a role in control of the cell cycle, stress response, ribosome biogenesis and in those bacteria that undergo differentiation, in morphogenesis control. This is GTPase Obg from Maricaulis maris (strain MCS10) (Caulobacter maris).